A 393-amino-acid chain; its full sequence is Chorismate synthase (393 aa).

NADP(+) contacts are provided by R40 and R46. Residues 129-131, 249-250, G301, 316-320, and R342 each bind FMN; these read RSS, QA, and KPIPT.

This sequence belongs to the chorismate synthase family. In terms of assembly, homotetramer. The cofactor is FMNH2.

The catalysed reaction is 5-O-(1-carboxyvinyl)-3-phosphoshikimate = chorismate + phosphate. It functions in the pathway metabolic intermediate biosynthesis; chorismate biosynthesis; chorismate from D-erythrose 4-phosphate and phosphoenolpyruvate: step 7/7. Catalyzes the anti-1,4-elimination of the C-3 phosphate and the C-6 proR hydrogen from 5-enolpyruvylshikimate-3-phosphate (EPSP) to yield chorismate, which is the branch point compound that serves as the starting substrate for the three terminal pathways of aromatic amino acid biosynthesis. This reaction introduces a second double bond into the aromatic ring system. This is Chorismate synthase from Geobacter metallireducens (strain ATCC 53774 / DSM 7210 / GS-15).